The chain runs to 386 residues: O-phospho-L-seryl-tRNA:Cys-tRNA synthase (386 aa).

Pyridoxal 5'-phosphate-binding positions include 89–90 (AR), asparagine 196, and 219–221 (SGH). N6-(pyridoxal phosphate)lysine is present on lysine 222.

It belongs to the SepCysS family. Homodimer. Interacts with SepRS. Pyridoxal 5'-phosphate is required as a cofactor.

It carries out the reaction O-phospho-L-seryl-tRNA(Cys) + hydrogen sulfide + H(+) = L-cysteinyl-tRNA(Cys) + phosphate. Functionally, converts O-phospho-L-seryl-tRNA(Cys) (Sep-tRNA(Cys)) to L-cysteinyl-tRNA(Cys) (Cys-tRNA(Cys)). The protein is O-phospho-L-seryl-tRNA:Cys-tRNA synthase of Methanosarcina mazei (strain ATCC BAA-159 / DSM 3647 / Goe1 / Go1 / JCM 11833 / OCM 88) (Methanosarcina frisia).